Here is a 207-residue protein sequence, read N- to C-terminus: Casparian strip membrane protein 1 (207 aa).

Residues 1 to 12 (MEGESTAVNITE) show a composition bias toward polar residues. Residues 1–24 (MEGESTAVNITETPKERKGKAPLL) form a disordered region. Residues 1-48 (MEGESTAVNITETPKERKGKAPLLAPPPASGGIKTIVQKAPKGGYKRG) are Cytoplasmic-facing. Residues 49-69 (LAVFDVVLRIAGIAAALGAVI) form a helical membrane-spanning segment. Residues 70-98 (AMGSTDQTLPFFTQFFQFKAEFDDLPVFT) are Extracellular-facing. Residues 99-119 (FFVIANAITAAYLALSIPISI) traverse the membrane as a helical segment. The Cytoplasmic segment spans residues 120 to 138 (VCIIRPHLVGPRVLLTFLD). The helical transmembrane segment at 139 to 159 (TVMVGLTTAAAGGAASIVYLA) threads the bilayer. Over 160–184 (HNGNSDANWPAICQQFNDFCQEVSG) the chain is Extracellular. The helical transmembrane segment at 185-205 (AVVASFITVVVLMFLIVLSAF) threads the bilayer. Residues 206-207 (SL) are Cytoplasmic-facing.

This sequence belongs to the Casparian strip membrane proteins (CASP) family. In terms of assembly, homodimer and heterodimers.

The protein localises to the cell membrane. In terms of biological role, regulates membrane-cell wall junctions and localized cell wall deposition. Required for establishment of the Casparian strip membrane domain (CSD) and the subsequent formation of Casparian strips, a cell wall modification of the root endodermis that determines an apoplastic barrier between the intraorganismal apoplasm and the extraorganismal apoplasm and prevents lateral diffusion. This chain is Casparian strip membrane protein 1, found in Taraxacum kok-saghyz (Russian dandelion).